The primary structure comprises 243 residues: Large ribosomal subunit protein uL3 (243 aa).

2 disordered regions span residues 139 to 164 (VSHR…KMPG) and 218 to 243 (KPGK…QEGV). At glutamine 151 the chain carries N5-methylglutamine. Residues 231–243 (QTAAAPAAEQEGV) are compositionally biased toward low complexity.

This sequence belongs to the universal ribosomal protein uL3 family. As to quaternary structure, part of the 50S ribosomal subunit. Forms a cluster with proteins L14 and L19. Post-translationally, methylated by PrmB.

One of the primary rRNA binding proteins, it binds directly near the 3'-end of the 23S rRNA, where it nucleates assembly of the 50S subunit. This Rhodopseudomonas palustris (strain BisB18) protein is Large ribosomal subunit protein uL3.